The following is a 250-amino-acid chain: Adenosylcobinamide-GDP ribazoletransferase (250 aa).

6 helical membrane passes run 33-53 (IASY…LLYI), 63-83 (IVMT…HIDG), 109-129 (LGTN…LFLT), 137-157 (LTAL…SMMI), 180-200 (FAIA…LAVF), and 203-223 (ILTI…LRIG).

It belongs to the CobS family. Mg(2+) serves as cofactor.

The protein localises to the cell membrane. It carries out the reaction alpha-ribazole + adenosylcob(III)inamide-GDP = adenosylcob(III)alamin + GMP + H(+). It catalyses the reaction alpha-ribazole 5'-phosphate + adenosylcob(III)inamide-GDP = adenosylcob(III)alamin 5'-phosphate + GMP + H(+). It participates in cofactor biosynthesis; adenosylcobalamin biosynthesis; adenosylcobalamin from cob(II)yrinate a,c-diamide: step 7/7. Joins adenosylcobinamide-GDP and alpha-ribazole to generate adenosylcobalamin (Ado-cobalamin). Also synthesizes adenosylcobalamin 5'-phosphate from adenosylcobinamide-GDP and alpha-ribazole 5'-phosphate. This chain is Adenosylcobinamide-GDP ribazoletransferase, found in Thermoanaerobacter pseudethanolicus (strain ATCC 33223 / 39E) (Clostridium thermohydrosulfuricum).